The primary structure comprises 148 residues: Proline-rich protein 13 (148 aa).

The interval methionine 1–aspartate 148 is disordered. Pro residues-rich tracts occupy residues alanine 27–glycine 67 and glycine 75–proline 93. A compositionally biased stretch (basic residues) spans methionine 109 to histidine 135. Residues serine 136–aspartate 148 show a composition bias toward low complexity.

The protein resides in the nucleus. In terms of biological role, negatively regulates TSP1 expression at the level of transcription. This down-regulation was shown to reduce taxane-induced apoptosis. The polypeptide is Proline-rich protein 13 (PRR13) (Homo sapiens (Human)).